A 181-amino-acid chain; its full sequence is MTGIKKPMSQYQDDNELEDWGPSKTQLKRDAEVLQKLGAEIVSLSHSELEKIPLDEELADAVELGRKLKPKKDESFRRHLQFIGRLMRSRDIEPIEEALSIIKNRHSTVNARLHRLEQWRERLITEGDSALNELMSQFHELDRQKLRQLIRSANKERELNKPPVAYREMYQYLRGEIEDLL.

Residues 1-23 (MTGIKKPMSQYQDDNELEDWGPS) form a disordered region.

The protein belongs to the DarP family.

It localises to the cytoplasm. Member of a network of 50S ribosomal subunit biogenesis factors which assembles along the 30S-50S interface, preventing incorrect 23S rRNA structures from forming. Promotes peptidyl transferase center (PTC) maturation. This is Dual-action ribosomal maturation protein DarP from Aeromonas salmonicida (strain A449).